Reading from the N-terminus, the 258-residue chain is Acyl-[acyl-carrier-protein]--UDP-N-acetylglucosamine O-acyltransferase (258 aa).

This sequence belongs to the transferase hexapeptide repeat family. LpxA subfamily. In terms of assembly, homotrimer.

Its subcellular location is the cytoplasm. The catalysed reaction is a (3R)-hydroxyacyl-[ACP] + UDP-N-acetyl-alpha-D-glucosamine = a UDP-3-O-[(3R)-3-hydroxyacyl]-N-acetyl-alpha-D-glucosamine + holo-[ACP]. The protein operates within glycolipid biosynthesis; lipid IV(A) biosynthesis; lipid IV(A) from (3R)-3-hydroxytetradecanoyl-[acyl-carrier-protein] and UDP-N-acetyl-alpha-D-glucosamine: step 1/6. Involved in the biosynthesis of lipid A, a phosphorylated glycolipid that anchors the lipopolysaccharide to the outer membrane of the cell. The chain is Acyl-[acyl-carrier-protein]--UDP-N-acetylglucosamine O-acyltransferase from Neisseria meningitidis serogroup C / serotype 2a (strain ATCC 700532 / DSM 15464 / FAM18).